Reading from the N-terminus, the 385-residue chain is Trans-enoyl reductase poxH (385 aa).

Residue 64–67 participates in NADP(+) binding; it reads QPYS. Position 156–163 (156–163) interacts with substrate; sequence PDPAAPPI. Residues 199 to 202, 223 to 226, tyrosine 241, and 289 to 290 contribute to the NADP(+) site; these read STSV, SGTD, and LG. 309–313 serves as a coordination point for substrate; the sequence is HMAPL. Residue 372-373 participates in NADP(+) binding; that stretch reads KR.

Belongs to the zinc-containing alcohol dehydrogenase family. As to quaternary structure, monomer.

It participates in secondary metabolite biosynthesis. Trans-enoyl reductase; part of the gene cluster that mediates the biosynthesis of oxaleimides, cytotoxic compounds containing an unusual disubstituted succinimide moiety. The first step of the pathway is provided by the HR-PKS poxF that serves in a new mode of collaborative biosynthesis with the PKS-NRPS poxE, by providing the olefin containing amino acid substrate via the synthesis of an ACP-bound dec-4-enoate. The cytochrome P450 monooxygenase poxM-catalyzed oxidation at the alpha-position creates the enzyme-bound 2-hydroxydec-4-enoyl-ACP thioester, which may be prone to spontaneous hydrolysis to yield 2-hydroxydec-4-enoic acid due to increased electrophilicity of the carbonyl. 2-hydroxydec-4-enoic acid can then be further oxidized by poxM to yield the alpha-ketoacid 2-oxodec-4-enoicacid, which is reductively aminated by the aminotransferase poxL to yield (S,E)-2-aminodec-4-enoic acid. The Hybrid PKS-NRPS synthetase poxE then performs condensation between the octaketide product of its PKS modules and the amino group of (S,E)-2-aminodec-4-enoic acid which is activated and incorporated by the adenylation domain. The resulting aminoacyl product can be cyclized by the Diels-Alderase PoxQ and reductively released by the reductive (R) domain of poxE to yield an aldehyde intermediate. The released aldehyde is then substrate for a Knoevenagel condensation by the hydrolyase poxO followed by an oxidation at the 5-position of the pyrrolidone ring. The presence of the olefin from the amino acid building block allows for migration of the substituted allyl group to occur. This allylic transposition reaction takes place in a conjugate addition, semipinacol-like fashion to yield a succinimide intermediate. Iterative two-electron oxidations of the C7 methyl of the succinimide intermediate to the carboxylic acid can be catalyzed by one of two remaining cytochrome P450 monooxygenasess poxC or poxD to yield oxaleimide A. Subsequent oxidation yields the maleimide scaffold oxaleimide I. Both oxaleimide A and oxaleimide I can undergo oxidative modifications in the decalin ring to yield the series of products oxaleimides B to H. The polypeptide is Trans-enoyl reductase poxH (Penicillium oxalicum).